The sequence spans 524 residues: Beta-glucosidase 23 (524 aa).

An N-terminal signal peptide occupies residues Met1 to Ala24. Gln54 contributes to the a beta-D-glucoside binding site. Asn60 carries N-linked (GlcNAc...) asparagine glycosylation. Residues His157 and Asn202–Glu203 each bind a beta-D-glucoside. The Proton donor role is filled by Glu203. Residues Cys222 and Cys230 are joined by a disulfide bond. A beta-D-glucoside-binding residues include Tyr346 and Glu418. Residue Glu418 is the Nucleophile of the active site. A glycan (N-linked (GlcNAc...) asparagine) is linked at Asn461. A beta-D-glucoside contacts are provided by residues Trp468, Glu475–Trp476, and Phe484. A glycan (N-linked (GlcNAc...) asparagine) is linked at Asn494. The Prevents secretion from ER signature appears at Lys521 to Leu524.

This sequence belongs to the glycosyl hydrolase 1 family. In terms of assembly, homodimers. Binds to the deubiquitinating enzyme AMSH3. The inactive form interacts with PBP1/JAL30 to form the PYK10 complex, at least composed of PYK10/BGLU23, BGLU21, BGLU22, JAL22, JAL23, PBP1/JAL30, PBP2/JAL31, JAL32, JAL33, JAL34, JAL35, GLL22 and GLL23. In terms of processing, forms interchain disulfide bonds. As to expression, expressed exclusively in roots.

The protein localises to the endoplasmic reticulum lumen. The catalysed reaction is Hydrolysis of terminal, non-reducing beta-D-glucosyl residues with release of beta-D-glucose.. With respect to regulation, activated by tissue damage and upon binding to PBP1 or PBP2. Its function is as follows. Beta-D-glucosidase active on scopolin &gt; esculin &gt;&gt; 4-MU-glucoside &gt;&gt; DIMBOA-glucoside. No activity with pNP-glucoside, oNP-glucoside and sinigrin as substrates. May possess beta-D-fucosidase activity. Required for the beneficial interaction with the endophytic fungus P.indica. May participate in the control of root colonization by P.indica by repressing defense responses and modulating other responses required for a mutualistic interaction. In Arabidopsis thaliana (Mouse-ear cress), this protein is Beta-glucosidase 23.